The following is a 416-amino-acid chain: MTMPSTANGGFPSVVVTAVTATTSISPDIESTWKGLLAGESGIHVLEDEYITKWDLPVKIGGHLKEPVDSHMSRLDLRRMSYVQRMSKLLSGRLWESTGSPEVDPDRFTVVVGTGLGGAERIVESYDLMNAGGPRKVSPLAVQMIMPNGAAATVGLQLGACAGVMTPVSACSSGSEAIAHAWRQIIMGDADVAVCGGVEGPIEALPIAAFSMMRAMSTRNDDPEGASRPFDKNRDGFVFGEAGALMLIETEEHAKARGAKPLARLLGAGITSDAFHMVAPAADGVRAGRAMTRSLELAGLSAKDVDHVNAHGTATPIGDSAEANAIRVAGCEQAAVYAPKSALGHSIGAVGALESVLTVLALRDGVIPPTLNYQTPDPEIDLDIVAGEPRYGDYRYAINNSFGFGGHNVALAFGRY.

One can recognise a Ketosynthase family 3 (KS3) domain in the interval 11–415; it reads FPSVVVTAVT…GHNVALAFGR (405 aa). Catalysis depends on for beta-ketoacyl synthase activity residues Cys171, His311, and His345. Residues His311 and His345 each contribute to the substrate site.

It belongs to the thiolase-like superfamily. Beta-ketoacyl-ACP synthases family.

It is found in the cytoplasm. It carries out the reaction an ultra-long-chain mono-unsaturated fatty acyl-[ACP] + malonyl-[ACP] + H(+) = a 3-oxo-ultra-long-chain mono-unsaturated fatty acyl-[ACP] + holo-[ACP] + CO2. Its pathway is lipid metabolism; mycolic acid biosynthesis. Its function is as follows. Part of the mycobacterial fatty acid elongation system FAS-II, which is involved in mycolic acid biosynthesis. Catalyzes the elongation of long chain acyl-ACP substrates by the addition of two carbons from malonyl-ACP to an acyl acceptor. Involved in the initial extension of the mycolate chain and forms monounsaturated fatty acids that averaged 40 carbons in length. This chain is 3-oxoacyl-[acyl-carrier-protein] synthase 1 (kasA), found in Mycobacterium leprae (strain TN).